A 368-amino-acid chain; its full sequence is MIYYLLRYINDLFDLPGLHVIEYLTFRASAAAITALLITLFVGPGFIKYLKTRFIEPVKEEAPPEHKKKNKLPTMGGLLIIFSIEISVLLWSKFIDPHVWLIMLAILWMGIIGFIDDYRKVVLKIKGGLSARYKLIGQVTLGLVVGCYTWYDPSFSVLLSTTTVPFFKYLTIDYGYFYIPIVIFIITAVSNAVNLTDGLDGLAAGSSAIVVMGLGGFSYLAGNAVYAVYLNIPFIPGGGEIAVVSMAIVMACVGFLWFNSNPAEIIMGDTGSLALGSAIAVIALLIKQELLLPLIAGIFFLETLSVSLQVLYFKYTKMRYGQGKRIFLMAPLHHHFQLKGWAEQKIVIRFWILTILFFLASLMTLKLR.

Helical transmembrane passes span 30–50 (AAAITALLITLFVGPGFIKYL), 72–92 (LPTMGGLLIIFSIEISVLLWS), 95–115 (IDPHVWLIMLAILWMGIIGFI), 139–159 (VTLGLVVGCYTWYDPSFSVLL), 169–189 (YLTIDYGYFYIPIVIFIITAV), 208–228 (AIVVMGLGGFSYLAGNAVYAV), 238–258 (GGEIAVVSMAIVMACVGFLWF), 264–286 (EIIMGDTGSLALGSAIAVIALLI), and 345–365 (KIVIRFWILTILFFLASLMTL).

Belongs to the glycosyltransferase 4 family. MraY subfamily. Requires Mg(2+) as cofactor.

The protein resides in the cell inner membrane. The enzyme catalyses UDP-N-acetyl-alpha-D-muramoyl-L-alanyl-gamma-D-glutamyl-meso-2,6-diaminopimeloyl-D-alanyl-D-alanine + di-trans,octa-cis-undecaprenyl phosphate = di-trans,octa-cis-undecaprenyl diphospho-N-acetyl-alpha-D-muramoyl-L-alanyl-D-glutamyl-meso-2,6-diaminopimeloyl-D-alanyl-D-alanine + UMP. It participates in cell wall biogenesis; peptidoglycan biosynthesis. Functionally, catalyzes the initial step of the lipid cycle reactions in the biosynthesis of the cell wall peptidoglycan: transfers peptidoglycan precursor phospho-MurNAc-pentapeptide from UDP-MurNAc-pentapeptide onto the lipid carrier undecaprenyl phosphate, yielding undecaprenyl-pyrophosphoryl-MurNAc-pentapeptide, known as lipid I. This Pelodictyon phaeoclathratiforme (strain DSM 5477 / BU-1) protein is Phospho-N-acetylmuramoyl-pentapeptide-transferase.